Here is a 372-residue protein sequence, read N- to C-terminus: Erythronate-4-phosphate dehydrogenase (372 aa).

Residues Ser-45 and Thr-66 each contribute to the substrate site. Residue Asp-146 participates in NAD(+) binding. Arg-209 is a catalytic residue. Position 233 (Asp-233) interacts with NAD(+). Residue Glu-238 is part of the active site. His-255 serves as the catalytic Proton donor. Gly-258 is an NAD(+) binding site. Substrate is bound at residue Tyr-259.

The protein belongs to the D-isomer specific 2-hydroxyacid dehydrogenase family. PdxB subfamily. In terms of assembly, homodimer.

Its subcellular location is the cytoplasm. The catalysed reaction is 4-phospho-D-erythronate + NAD(+) = (R)-3-hydroxy-2-oxo-4-phosphooxybutanoate + NADH + H(+). It functions in the pathway cofactor biosynthesis; pyridoxine 5'-phosphate biosynthesis; pyridoxine 5'-phosphate from D-erythrose 4-phosphate: step 2/5. Catalyzes the oxidation of erythronate-4-phosphate to 3-hydroxy-2-oxo-4-phosphonooxybutanoate. The protein is Erythronate-4-phosphate dehydrogenase of Blochmanniella floridana.